The chain runs to 180 residues: tRNA (cytidine(56)-2'-O)-methyltransferase (180 aa).

S-adenosyl-L-methionine-binding positions include L82, G112–V116, and V130–E137.

It belongs to the aTrm56 family. In terms of assembly, homodimer.

Its subcellular location is the cytoplasm. The enzyme catalyses cytidine(56) in tRNA + S-adenosyl-L-methionine = 2'-O-methylcytidine(56) in tRNA + S-adenosyl-L-homocysteine + H(+). Specifically catalyzes the AdoMet-dependent 2'-O-ribose methylation of cytidine at position 56 in tRNAs. The chain is tRNA (cytidine(56)-2'-O)-methyltransferase from Methanococcus vannielii (strain ATCC 35089 / DSM 1224 / JCM 13029 / OCM 148 / SB).